A 255-amino-acid chain; its full sequence is Ribosomal RNA small subunit methyltransferase A (255 aa).

S-adenosyl-L-methionine-binding residues include N11, L13, G38, E59, D83, and N101.

It belongs to the class I-like SAM-binding methyltransferase superfamily. rRNA adenine N(6)-methyltransferase family. RsmA subfamily.

The protein localises to the cytoplasm. It catalyses the reaction adenosine(1518)/adenosine(1519) in 16S rRNA + 4 S-adenosyl-L-methionine = N(6)-dimethyladenosine(1518)/N(6)-dimethyladenosine(1519) in 16S rRNA + 4 S-adenosyl-L-homocysteine + 4 H(+). Its function is as follows. Specifically dimethylates two adjacent adenosines (A1518 and A1519) in the loop of a conserved hairpin near the 3'-end of 16S rRNA in the 30S particle. May play a critical role in biogenesis of 30S subunits. The chain is Ribosomal RNA small subunit methyltransferase A from Thiobacillus denitrificans (strain ATCC 25259 / T1).